We begin with the raw amino-acid sequence, 106 residues long: Large ribosomal subunit protein uL24 (106 aa).

Belongs to the universal ribosomal protein uL24 family. In terms of assembly, part of the 50S ribosomal subunit.

Its function is as follows. One of two assembly initiator proteins, it binds directly to the 5'-end of the 23S rRNA, where it nucleates assembly of the 50S subunit. One of the proteins that surrounds the polypeptide exit tunnel on the outside of the subunit. The chain is Large ribosomal subunit protein uL24 from Clostridium tetani (strain Massachusetts / E88).